A 167-amino-acid polypeptide reads, in one-letter code: Protein-export protein SecB (167 aa).

A disordered region spans residues 1–20 (MASNDDAPVGAANGNGNTGA).

This sequence belongs to the SecB family. Homotetramer, a dimer of dimers. One homotetramer interacts with 1 SecA dimer.

Its subcellular location is the cytoplasm. Its function is as follows. One of the proteins required for the normal export of preproteins out of the cell cytoplasm. It is a molecular chaperone that binds to a subset of precursor proteins, maintaining them in a translocation-competent state. It also specifically binds to its receptor SecA. In Mesorhizobium japonicum (strain LMG 29417 / CECT 9101 / MAFF 303099) (Mesorhizobium loti (strain MAFF 303099)), this protein is Protein-export protein SecB.